A 308-amino-acid chain; its full sequence is Ribosomal protein L11 methyltransferase (308 aa).

S-adenosyl-L-methionine-binding residues include T160, G181, D203, and N245.

Belongs to the methyltransferase superfamily. PrmA family.

The protein localises to the cytoplasm. It carries out the reaction L-lysyl-[protein] + 3 S-adenosyl-L-methionine = N(6),N(6),N(6)-trimethyl-L-lysyl-[protein] + 3 S-adenosyl-L-homocysteine + 3 H(+). Methylates ribosomal protein L11. The chain is Ribosomal protein L11 methyltransferase from Thermoanaerobacter sp. (strain X514).